Here is a 565-residue protein sequence, read N- to C-terminus: Oxygen-dependent choline dehydrogenase (565 aa).

6–35 (DYIIIGAGSAGNVLATRLTEDADVSVLLLE) contacts FAD. His475 functions as the Proton acceptor in the catalytic mechanism. Residues 541–565 (RSNAPYFVAGERPVRGQPQRAVSAA) are disordered.

The protein belongs to the GMC oxidoreductase family. FAD is required as a cofactor.

The catalysed reaction is choline + A = betaine aldehyde + AH2. It carries out the reaction betaine aldehyde + NAD(+) + H2O = glycine betaine + NADH + 2 H(+). Its pathway is amine and polyamine biosynthesis; betaine biosynthesis via choline pathway; betaine aldehyde from choline (cytochrome c reductase route): step 1/1. Involved in the biosynthesis of the osmoprotectant glycine betaine. Catalyzes the oxidation of choline to betaine aldehyde and betaine aldehyde to glycine betaine at the same rate. The sequence is that of Oxygen-dependent choline dehydrogenase from Ectopseudomonas mendocina (strain ymp) (Pseudomonas mendocina).